The sequence spans 148 residues: Succinate dehydrogenase assembly factor 3, mitochondrial (148 aa).

A mitochondrion-targeting transit peptide spans 1–12 (MYALRPTLRRSA). Residues 129 to 148 (RGTEGDLEDGDGGESGQKSQ) form a disordered region.

It belongs to the complex I LYR family. SDHAF3 subfamily. Interacts with the iron-sulfur protein subunit within the SDH catalytic dimer.

It is found in the mitochondrion matrix. In terms of biological role, plays an essential role in the assembly of succinate dehydrogenase (SDH), an enzyme complex (also referred to as respiratory complex II) that is a component of both the tricarboxylic acid (TCA) cycle and the mitochondrial electron transport chain, and which couples the oxidation of succinate to fumarate with the reduction of ubiquinone (coenzyme Q) to ubiquinol. Promotes maturation of the iron-sulfur protein subunit of the SDH catalytic dimer, protecting it from the deleterious effects of oxidants. May act together with SDHAF1. The chain is Succinate dehydrogenase assembly factor 3, mitochondrial from Neurospora crassa (strain ATCC 24698 / 74-OR23-1A / CBS 708.71 / DSM 1257 / FGSC 987).